A 461-amino-acid polypeptide reads, in one-letter code: Argininosuccinate lyase (461 aa).

It belongs to the lyase 1 family. Argininosuccinate lyase subfamily.

The protein resides in the cytoplasm. The catalysed reaction is 2-(N(omega)-L-arginino)succinate = fumarate + L-arginine. It functions in the pathway amino-acid biosynthesis; L-arginine biosynthesis; L-arginine from L-ornithine and carbamoyl phosphate: step 3/3. The chain is Argininosuccinate lyase from Nitrosomonas eutropha (strain DSM 101675 / C91 / Nm57).